A 114-amino-acid chain; its full sequence is Probable gas vesicle protein J2 (114 aa).

The segment covering 1–10 (MTDLDHRYPG) has biased composition (basic and acidic residues). A disordered region spans residues 1 to 21 (MTDLDHRYPGEETEPYGPPSG).

This sequence belongs to the gas vesicle GvpA family. In terms of assembly, interacts with GvpA.

The protein localises to the gas vesicle. In terms of biological role, a minor component of the gas vesicle, might be involved in nucleating gas vesicle formation. Gas vesicles (GV) are hollow, gas filled proteinaceous nanostructures. It is not clear what function GVs perform in soil bacteria. In Streptomyces coelicolor (strain ATCC BAA-471 / A3(2) / M145), this protein is Probable gas vesicle protein J2.